Consider the following 501-residue polypeptide: Lysine--tRNA ligase (501 aa).

E412 and E419 together coordinate Mg(2+).

It belongs to the class-II aminoacyl-tRNA synthetase family. In terms of assembly, homodimer. Requires Mg(2+) as cofactor.

Its subcellular location is the cytoplasm. The enzyme catalyses tRNA(Lys) + L-lysine + ATP = L-lysyl-tRNA(Lys) + AMP + diphosphate. The sequence is that of Lysine--tRNA ligase from Dechloromonas aromatica (strain RCB).